A 183-amino-acid polypeptide reads, in one-letter code: Cell division protein ZapC (183 aa).

Belongs to the ZapC family. In terms of assembly, interacts directly with FtsZ.

It is found in the cytoplasm. Functionally, contributes to the efficiency of the cell division process by stabilizing the polymeric form of the cell division protein FtsZ. Acts by promoting interactions between FtsZ protofilaments and suppressing the GTPase activity of FtsZ. The sequence is that of Cell division protein ZapC from Xenorhabdus bovienii (strain SS-2004) (Xenorhabdus nematophila subsp. bovienii).